Consider the following 642-residue polypeptide: Eukaryotic translation initiation factor 2A (642 aa).

4 WD repeats span residues 69–115 (MKLS…KKDC), 186–224 (TYLI…ITKK), 289–331 (LTTG…HSLP), and 374–419 (FDAT…VFVK). The tract at residues 485–593 (ISQHPSREAS…KETSPEEKKI (109 aa)) is disordered. Low complexity-rich tracts occupy residues 493 to 507 (ASSN…AGGA) and 563 to 583 (TSPD…PTNN). Phosphoserine is present on residues Ser-564, Ser-567, and Ser-572.

Belongs to the WD repeat EIF2A family. In terms of processing, ubiquitinated, probably leading to its degradation. May explain why it has a short half-life of 17 minutes.

Functions in the early steps of protein synthesis of a small number of specific mRNAs. Acts by directing the binding of methionyl-tRNAi to 40S ribosomal subunits. In contrast to the eIF-2 complex, it binds methionyl-tRNAi to 40S subunits in a codon-dependent manner, whereas the eIF-2 complex binds methionyl-tRNAi to 40S subunits in a GTP-dependent manner. Specifically associates with both 40S subunits and 80S ribosomes. This is Eukaryotic translation initiation factor 2A from Saccharomyces cerevisiae (strain ATCC 204508 / S288c) (Baker's yeast).